The following is a 343-amino-acid chain: Anthranilate phosphoribosyltransferase (343 aa).

5-phospho-alpha-D-ribose 1-diphosphate is bound by residues Gly-84, 87–88 (GD), Thr-92, 94–97 (NIST), 112–120 (KHGNRGVSS), and Ser-124. Position 84 (Gly-84) interacts with anthranilate. Position 96 (Ser-96) interacts with Mg(2+). Asn-115 is an anthranilate binding site. Arg-170 is an anthranilate binding site. Mg(2+) is bound by residues Asp-229 and Glu-230.

Belongs to the anthranilate phosphoribosyltransferase family. Homodimer. The cofactor is Mg(2+).

It catalyses the reaction N-(5-phospho-beta-D-ribosyl)anthranilate + diphosphate = 5-phospho-alpha-D-ribose 1-diphosphate + anthranilate. It functions in the pathway amino-acid biosynthesis; L-tryptophan biosynthesis; L-tryptophan from chorismate: step 2/5. Its function is as follows. Catalyzes the transfer of the phosphoribosyl group of 5-phosphorylribose-1-pyrophosphate (PRPP) to anthranilate to yield N-(5'-phosphoribosyl)-anthranilate (PRA). This chain is Anthranilate phosphoribosyltransferase, found in Burkholderia ambifaria (strain ATCC BAA-244 / DSM 16087 / CCUG 44356 / LMG 19182 / AMMD) (Burkholderia cepacia (strain AMMD)).